Here is a 436-residue protein sequence, read N- to C-terminus: uncharacterized protein (436 aa).

Residues 1-20 (MKCAVAILLVCLTLQQAAYG) form the signal peptide. 3 coiled-coil regions span residues 25-87 (EEVK…ALRN), 154-207 (MRKT…NSVE), and 247-329 (ESWG…ASLL). The span at 371–390 (EEEIAPSTEEDGSEELEADS) shows a compositional bias: acidic residues. Residues 371–419 (EEEIAPSTEEDGSEELEADSYDSKVGGESPISQRTEERQGAEERSRLRR) form a disordered region. A compositionally biased stretch (basic and acidic residues) spans 404 to 415 (RTEERQGAEERS).

In terms of tissue distribution, component of the acid-insoluble organic matrix of the aragonitic skeleton (at protein level).

Its subcellular location is the secreted. This is an uncharacterized protein from Acropora millepora (Staghorn coral).